We begin with the raw amino-acid sequence, 386 residues long: Succinate--CoA ligase [ADP-forming] subunit beta (386 aa).

An ATP-grasp domain is found at 9-244 (KDLLTSYQLP…PSQENIRDVL (236 aa)). ATP is bound by residues Lys-46, 53–55 (GRG), Val-102, and Glu-107. Asn-199 and Asp-213 together coordinate Mg(2+). Substrate-binding positions include Asn-264 and 321-323 (GIM).

The protein belongs to the succinate/malate CoA ligase beta subunit family. As to quaternary structure, heterotetramer of two alpha and two beta subunits. The cofactor is Mg(2+).

It carries out the reaction succinate + ATP + CoA = succinyl-CoA + ADP + phosphate. The enzyme catalyses GTP + succinate + CoA = succinyl-CoA + GDP + phosphate. It functions in the pathway carbohydrate metabolism; tricarboxylic acid cycle; succinate from succinyl-CoA (ligase route): step 1/1. Functionally, succinyl-CoA synthetase functions in the citric acid cycle (TCA), coupling the hydrolysis of succinyl-CoA to the synthesis of either ATP or GTP and thus represents the only step of substrate-level phosphorylation in the TCA. The beta subunit provides nucleotide specificity of the enzyme and binds the substrate succinate, while the binding sites for coenzyme A and phosphate are found in the alpha subunit. The polypeptide is Succinate--CoA ligase [ADP-forming] subunit beta (Chlamydia muridarum (strain MoPn / Nigg)).